Reading from the N-terminus, the 142-residue chain is General odorant-binding protein 99a (142 aa).

The first 16 residues, 1–16 (MKVFVAICVLIGLASA), serve as a signal peptide directing secretion. 3 cysteine pairs are disulfide-bonded: Cys-33–Cys-64, Cys-60–Cys-116, and Cys-105–Cys-125.

This sequence belongs to the PBP/GOBP family. As to expression, expressed in larval chemosensory organ. Specifically expressed exclusively in a subset of chemosensory sensilla on the third antennal segment.

It is found in the secreted. Present in the aqueous fluid surrounding olfactory sensory dendrites and are thought to aid in the capture and transport of hydrophobic odorants into and through this fluid. In Drosophila melanogaster (Fruit fly), this protein is General odorant-binding protein 99a (Obp99a).